Reading from the N-terminus, the 105-residue chain is MAEETNQQAPESGASSSQPTSRPSGPRGGSGGRKFFRRKKVCKFCTEKIDAIPYRDVRLLQQFVAERGKIVPRRLTGVCTTHQRRLTRAIKQARNIALLPFAARY.

Residues 1–10 (MAEETNQQAP) show a composition bias toward polar residues. Residues 1 to 34 (MAEETNQQAPESGASSSQPTSRPSGPRGGSGGRK) form a disordered region. Residues 12–25 (SGASSSQPTSRPSG) show a composition bias toward low complexity.

It belongs to the bacterial ribosomal protein bS18 family. As to quaternary structure, part of the 30S ribosomal subunit. Forms a tight heterodimer with protein bS6.

Functionally, binds as a heterodimer with protein bS6 to the central domain of the 16S rRNA, where it helps stabilize the platform of the 30S subunit. The chain is Small ribosomal subunit protein bS18 from Acidobacterium capsulatum (strain ATCC 51196 / DSM 11244 / BCRC 80197 / JCM 7670 / NBRC 15755 / NCIMB 13165 / 161).